A 137-amino-acid chain; its full sequence is Cellular retinoic acid-binding protein 1 (137 aa).

Residues K21–K31 carry the Nuclear localization signal motif. R132 to Y134 provides a ligand contact to all-trans-retinoate.

The protein belongs to the calycin superfamily. Fatty-acid binding protein (FABP) family.

It is found in the cytoplasm. Cytosolic CRABPs may regulate the access of retinoic acid to the nuclear retinoic acid receptors. The chain is Cellular retinoic acid-binding protein 1 (crabp1) from Takifugu rubripes (Japanese pufferfish).